The chain runs to 568 residues: Proline--tRNA ligase (568 aa).

The protein belongs to the class-II aminoacyl-tRNA synthetase family. ProS type 1 subfamily. Homodimer.

It is found in the cytoplasm. The catalysed reaction is tRNA(Pro) + L-proline + ATP = L-prolyl-tRNA(Pro) + AMP + diphosphate. In terms of biological role, catalyzes the attachment of proline to tRNA(Pro) in a two-step reaction: proline is first activated by ATP to form Pro-AMP and then transferred to the acceptor end of tRNA(Pro). As ProRS can inadvertently accommodate and process non-cognate amino acids such as alanine and cysteine, to avoid such errors it has two additional distinct editing activities against alanine. One activity is designated as 'pretransfer' editing and involves the tRNA(Pro)-independent hydrolysis of activated Ala-AMP. The other activity is designated 'posttransfer' editing and involves deacylation of mischarged Ala-tRNA(Pro). The misacylated Cys-tRNA(Pro) is not edited by ProRS. This is Proline--tRNA ligase from Lysinibacillus sphaericus (strain C3-41).